We begin with the raw amino-acid sequence, 458 residues long: Protein adenylyltransferase FICD (458 aa).

Topologically, residues 1-23 are cytoplasmic; it reads MILMPMASVVAVAEPKWVSVWGR. A helical; Signal-anchor for type II membrane protein transmembrane segment spans residues 24 to 44; sequence FLWMALLSMALGSLLALLLPL. Residues 45 to 458 are Lumenal-facing; sequence GVVEEHCLAV…GFKETLPVRP (414 aa). Threonine 80 bears the O-AMP-threonine; by autocatalysis mark. TPR repeat units follow at residues 106 to 139 and 140 to 173; these read AKAA…DPGF and VDAL…SPFH. Position 183 is an O-AMP-threonine; by autocatalysis (threonine 183). The Inhibitory (S/T)XXXE(G/N) motif motif lies at 230–235; sequence TVAIEG. Glutamate 234 provides a ligand contact to ATP. A glycan (N-linked (GlcNAc...) asparagine) is linked at asparagine 275. The 136-residue stretch at 285–420 folds into the Fido domain; the sequence is VTMDDMLEIH…VRPFIRFIAK (136 aa). An ATP-binding site is contributed by 316-319; it reads VGHH. Residue histidine 363 is part of the active site. Residues 367 to 374, 399 to 400, and asparagine 407 each bind ATP; these read DGNGRTSR and YY.

It belongs to the fic family. As to quaternary structure, homodimer. Interacts with HD. It depends on Mg(2+) as a cofactor. Mn(2+) serves as cofactor. Post-translationally, auto-AMPylated in vitro.

It localises to the endoplasmic reticulum membrane. It catalyses the reaction L-tyrosyl-[protein] + ATP = O-(5'-adenylyl)-L-tyrosyl-[protein] + diphosphate. It carries out the reaction 3-O-(5'-adenylyl)-L-threonyl-[protein] + H2O = L-threonyl-[protein] + AMP + H(+). The catalysed reaction is L-threonyl-[protein] + ATP = 3-O-(5'-adenylyl)-L-threonyl-[protein] + diphosphate. Its activity is regulated as follows. The side chain of Glu-234 determines which of the two opposing activities (AMPylase or de-AMPylase) will take place. In response to endoplasmic reticulum stress, mediates de-AMPylase activity. Adenylyltransferase activity is inhibited by the inhibitory helix present at the N-terminus: Glu-234 binds ATP and competes with ATP-binding at Arg-374, thereby preventing adenylyltransferase activity. In unstressed cells, disengagement of Glu-234 promotes adenylyltransferase activity. Activation dissociates ATP-binding from Glu-234, allowing ordered binding of the entire ATP moiety with the alpha-phosphate in an orientation that is productive for accepting an incoming target hydroxyl side chain. Protein that can both mediate the addition of adenosine 5'-monophosphate (AMP) to specific residues of target proteins (AMPylation), and the removal of the same modification from target proteins (de-AMPylation), depending on the context. The side chain of Glu-231 determines which of the two opposing activities (AMPylase or de-AMPylase) will take place. Acts as a key regulator of the ERN1/IRE1-mediated unfolded protein response (UPR) by mediating AMPylation or de-AMPylation of HSPA5/BiP. In unstressed cells, acts as an adenylyltransferase by mediating AMPylation of HSPA5/BiP at 'Thr-518', thereby inactivating it. In response to endoplasmic reticulum stress, acts as a phosphodiesterase by mediating removal of ATP (de-AMPylation) from HSPA5/BiP at 'Thr-518', leading to restore HSPA5/BiP activity. Although it is able to AMPylate RhoA, Rac and Cdc42 Rho GTPases in vitro, Rho GTPases do not constitute physiological substrates. This chain is Protein adenylyltransferase FICD, found in Mus musculus (Mouse).